The chain runs to 800 residues: Phenylalanine--tRNA ligase beta subunit (800 aa).

Positions 39–154 (TKDIKKLVVG…EAVKPGTDAL (116 aa)) constitute a tRNA-binding domain. Residues 408-483 (SFVTPIKITA…RIYGYDDIPS (76 aa)) form the B5 domain. Aspartate 461, aspartate 467, glutamate 470, and glutamate 471 together coordinate Mg(2+). Residues 708-800 (PRFPGVTRDI…ALKKHGAIIR (93 aa)) form the FDX-ACB domain.

Belongs to the phenylalanyl-tRNA synthetase beta subunit family. Type 1 subfamily. In terms of assembly, tetramer of two alpha and two beta subunits. Mg(2+) serves as cofactor.

It localises to the cytoplasm. The catalysed reaction is tRNA(Phe) + L-phenylalanine + ATP = L-phenylalanyl-tRNA(Phe) + AMP + diphosphate + H(+). This is Phenylalanine--tRNA ligase beta subunit from Staphylococcus epidermidis (strain ATCC 35984 / DSM 28319 / BCRC 17069 / CCUG 31568 / BM 3577 / RP62A).